The chain runs to 326 residues: MLLNGEDGSMTIKINHVKEYEALVEIYKKEGLDTSLFGNRIAAIIISGDKIIGLNSVPGVKIRGEEVENGVKADIEIADNVKLPFPIHLCTGYLRSEGYQKVIFNIKIGKNSIVKFTSHCIFPYAKDFSHEALTSIKVGENSWVSYEDEHIHGEGVRMISKTEIELNKNARYTGKFSLTKHRAKELKLEMIANLGERSVLELESKVKAVKDDSVEVREVAYLKGAYSRANLKSTVIAFDEARANVVNEAYGFGDYAKGHVECHEIVKGNADVQTVPLLRVKNDKAELTHEASIGRINEAQLMQLMAKGLTDEEATELIIRGLLGEY.

It belongs to the iron-sulfur cluster assembly SufBD family.

This is Iron-sulfur cluster assembly SufBD family protein PH0883 from Pyrococcus horikoshii (strain ATCC 700860 / DSM 12428 / JCM 9974 / NBRC 100139 / OT-3).